We begin with the raw amino-acid sequence, 292 residues long: MRTHLPLNALRAFEASARHLNFTKAALELYVTQGAVSQQVRMLEERLGVILFKRLPRGLEMTDDAQILFSVLTTAFSDIERVFKQFERGEYRDVVSIAAVGTFAVGWLLPRLAEFRQLYPRIELNLRTNNNVVNLATEGLDFAIRFGEGLWPLTHNKALFSAPLTVLCSSDTAKPLQHPTDLINETLYRSYREDEWLQWFEKANMSPIKITGSIFDPSRLMIESAIYEGGVALAPAKMFSREIENGQLVQPFKIEVELGKYWLTYLKSKPMTASMEIFQQWLMNEALKEISE.

Positions 5–62 (LPLNALRAFEASARHLNFTKAALELYVTQGAVSQQVRMLEERLGVILFKRLPRGLEMT) constitute an HTH lysR-type domain. The segment at residues 22–41 (FTKAALELYVTQGAVSQQVR) is a DNA-binding region (H-T-H motif).

It belongs to the LysR transcriptional regulatory family.

Its function is as follows. Positive regulator of the expression of the gene (blaB) for beta-lactamase. This is HTH-type transcriptional regulator BlaA (blaA) from Proteus vulgaris.